The sequence spans 130 residues: ATP synthase epsilon chain (130 aa).

The protein belongs to the ATPase epsilon chain family. F-type ATPases have 2 components, CF(1) - the catalytic core - and CF(0) - the membrane proton channel. CF(1) has five subunits: alpha(3), beta(3), gamma(1), delta(1), epsilon(1). CF(0) has three main subunits: a, b and c.

The protein localises to the cell inner membrane. Its function is as follows. Produces ATP from ADP in the presence of a proton gradient across the membrane. This Campylobacter lari (strain RM2100 / D67 / ATCC BAA-1060) protein is ATP synthase epsilon chain.